The chain runs to 198 residues: Putative transposase InsO for insertion sequence element IS911B (198 aa).

The Integrase catalytic domain maps to 105–198 (AVTEPNQVWC…YCGDTGSGRV (94 aa)).

Functionally, involved in the transposition of the insertion sequence IS911B. This chain is Putative transposase InsO for insertion sequence element IS911B (insO2), found in Escherichia coli (strain K12).